The sequence spans 116 residues: Small ribosomal subunit protein uS13m (116 aa).

A disordered region spans residues 92–116 (HQDGSPLRGQRTHTNARTARKQIRK).

The protein belongs to the universal ribosomal protein uS13 family. Part of the small ribosomal subunit.

It is found in the mitochondrion. In terms of biological role, located at the top of the head of the small subunit, it contacts several helices of the 18S rRNA. The protein is Small ribosomal subunit protein uS13m (RPS13) of Triticum aestivum (Wheat).